Consider the following 302-residue polypeptide: Beta-casein (302 aa).

Positions 1–15 (MKLLILTCLVALGFA) are cleaved as a signal peptide. Phosphoserine occurs at positions 23 and 25. 16 tandem repeats follow at residues 144–151 (KREMLPIY), 152–159 (ERERLPAH), 160–167 (KRESLLAH), 168–175 (ERESLLAH), 176–182 (ERDILVP), 183–190 (QREMSFVP), 191–198 (EREFLFAS), 199–204 (ERVVLP), 205–214 (EQEKEILHND), 215–222 (EREVLAVH), 223–230 (KKEILPPF), 231–238 (EKEKVLPL), 241–247 (HRVVPLP), 248–255 (QREIVPPF), 256–262 (QRETLLP), and 263–269 (EEILPVN). The segment at 144–269 (KREMLPIYER…LLPEEILPVN (126 aa)) is 16 X approximate tandem repeats.

Belongs to the beta-casein family. Mammary gland specific. Secreted in milk.

The protein resides in the secreted. Its function is as follows. Important role in determination of the surface properties of the casein micelles. This is Beta-casein (CSN2) from Notamacropus eugenii (Tammar wallaby).